A 555-amino-acid polypeptide reads, in one-letter code: Carboxylic ester hydrolase (555 aa).

The first 19 residues, 1-19 (MELSVIALLLLGFVNFSWQ), serve as a signal peptide directing secretion. A disulfide bridge connects residues cysteine 86 and cysteine 107. N-linked (GlcNAc...) asparagine glycans are attached at residues asparagine 120 and asparagine 144. Serine 211 (acyl-ester intermediate) is an active-site residue. Residues cysteine 263 and cysteine 274 are joined by a disulfide bond. The active-site Charge relay system is glutamate 336. 2 N-linked (GlcNAc...) asparagine glycosylation sites follow: asparagine 369 and asparagine 397. The Charge relay system role is filled by histidine 459. N-linked (GlcNAc...) asparagine glycosylation is found at asparagine 473 and asparagine 533.

Belongs to the type-B carboxylesterase/lipase family. Post-translationally, N-glycosylated. Expressed in several tissues, including epidermis (at protein level), fat body (at protein level), gut (at protein level), muscle (at protein level), and venom gland (at protein level).

The protein localises to the secreted. It carries out the reaction a carboxylic ester + H2O = an alcohol + a carboxylate + H(+). Functionally, lipolytic agent that may be involved in distributing the venom via degradation of blood triglycerides. The recombinant protein degrades triglycerides and exhibits high lipolytic activity toward long-chain triglycerides (tested on tributyrin, trioctanoin and triolein). Does not affect mammalian cells. This Bombus ignitus (Bumblebee) protein is Carboxylic ester hydrolase (vCaE).